A 362-amino-acid polypeptide reads, in one-letter code: UDP-N-acetylglucosamine--N-acetylmuramyl-(pentapeptide) pyrophosphoryl-undecaprenol N-acetylglucosamine transferase (362 aa).

Residues 15–17 (TGG), N127, R165, S191, I247, 266–271 (ALTVSE), and Q292 contribute to the UDP-N-acetyl-alpha-D-glucosamine site.

Belongs to the glycosyltransferase 28 family. MurG subfamily.

Its subcellular location is the cell inner membrane. It carries out the reaction di-trans,octa-cis-undecaprenyl diphospho-N-acetyl-alpha-D-muramoyl-L-alanyl-D-glutamyl-meso-2,6-diaminopimeloyl-D-alanyl-D-alanine + UDP-N-acetyl-alpha-D-glucosamine = di-trans,octa-cis-undecaprenyl diphospho-[N-acetyl-alpha-D-glucosaminyl-(1-&gt;4)]-N-acetyl-alpha-D-muramoyl-L-alanyl-D-glutamyl-meso-2,6-diaminopimeloyl-D-alanyl-D-alanine + UDP + H(+). The protein operates within cell wall biogenesis; peptidoglycan biosynthesis. Functionally, cell wall formation. Catalyzes the transfer of a GlcNAc subunit on undecaprenyl-pyrophosphoryl-MurNAc-pentapeptide (lipid intermediate I) to form undecaprenyl-pyrophosphoryl-MurNAc-(pentapeptide)GlcNAc (lipid intermediate II). This chain is UDP-N-acetylglucosamine--N-acetylmuramyl-(pentapeptide) pyrophosphoryl-undecaprenol N-acetylglucosamine transferase, found in Shewanella baltica (strain OS185).